Here is a 159-residue protein sequence, read N- to C-terminus: 2-C-methyl-D-erythritol 2,4-cyclodiphosphate synthase (159 aa).

The a divalent metal cation site is built by Asp-10 and His-12. 4-CDP-2-C-methyl-D-erythritol 2-phosphate contacts are provided by residues 10–12 and 36–37; these read DVH and HS. His-44 contributes to the a divalent metal cation binding site. Residues 58-60, 63-67, 102-108, 134-137, Phe-141, and Arg-144 each bind 4-CDP-2-C-methyl-D-erythritol 2-phosphate; these read DIG, FPDTD, AQAPKMA, and TTTE.

The protein belongs to the IspF family. As to quaternary structure, homotrimer. A divalent metal cation serves as cofactor.

It catalyses the reaction 4-CDP-2-C-methyl-D-erythritol 2-phosphate = 2-C-methyl-D-erythritol 2,4-cyclic diphosphate + CMP. The protein operates within isoprenoid biosynthesis; isopentenyl diphosphate biosynthesis via DXP pathway; isopentenyl diphosphate from 1-deoxy-D-xylulose 5-phosphate: step 4/6. In terms of biological role, involved in the biosynthesis of isopentenyl diphosphate (IPP) and dimethylallyl diphosphate (DMAPP), two major building blocks of isoprenoid compounds. Catalyzes the conversion of 4-diphosphocytidyl-2-C-methyl-D-erythritol 2-phosphate (CDP-ME2P) to 2-C-methyl-D-erythritol 2,4-cyclodiphosphate (ME-CPP) with a corresponding release of cytidine 5-monophosphate (CMP). The polypeptide is 2-C-methyl-D-erythritol 2,4-cyclodiphosphate synthase (Shewanella sp. (strain ANA-3)).